Here is a 154-residue protein sequence, read N- to C-terminus: Nuclear cap-binding protein subunit 2 (154 aa).

Residues Y10, Y33, 102-106 (RVDWD), 113-117 (RQYGR), and 123-124 (QV) each bind mRNA. One can recognise an RRM domain in the interval 30–108 (CTLYVGNLSF…RLIRVDWDAG (79 aa)).

It belongs to the RRM NCBP2 family. In terms of assembly, component of the nuclear cap-binding complex (CBC), a heterodimer composed of Cbp80 and Cbp20 that interacts with m7GpppG-capped RNA. Interacts with Ars2.

It is found in the nucleus. Component of the cap-binding complex (CBC), which binds co-transcriptionally to the 5' cap of pre-mRNAs and is involved in various processes such as pre-mRNA splicing and RNA-mediated gene silencing (RNAi). The CBC complex is involved in miRNA-mediated RNA interference via its interaction with Ars2 and is required for primary microRNAs (miRNAs) processing. Also involved in innate immunity via the short interfering RNAs (siRNAs) processing machinery by restricting the viral RNA production. In the CBC complex, Cbp20 recognizes and binds capped RNAs (m7GpppG-capped RNA) but requires Cbp80 to stabilize the movement of its N-terminal loop and lock the CBC into a high affinity cap-binding state with the cap structure. The chain is Nuclear cap-binding protein subunit 2 (Cbp20) from Drosophila persimilis (Fruit fly).